Here is a 328-residue protein sequence, read N- to C-terminus: Tyrosine--tRNA ligase (328 aa).

Tyr33 provides a ligand contact to L-tyrosine. The short motif at 38-46 (PSGVLHIGH) is the 'HIGH' region element. Residues Tyr154, Gln158, Asp161, and Gln176 each coordinate L-tyrosine. The segment at 193-227 (EPPTSLHTPLIADLGTGRGKMSSSEGVTISMEDSR) is disordered. Positions 212–216 (KMSSS) match the 'KMSKS' region motif. Residue Ser215 participates in ATP binding.

It belongs to the class-I aminoacyl-tRNA synthetase family. TyrS type 3 subfamily. Homodimer.

The protein resides in the cytoplasm. The catalysed reaction is tRNA(Tyr) + L-tyrosine + ATP = L-tyrosyl-tRNA(Tyr) + AMP + diphosphate + H(+). Functionally, catalyzes the attachment of tyrosine to tRNA(Tyr) in a two-step reaction: tyrosine is first activated by ATP to form Tyr-AMP and then transferred to the acceptor end of tRNA(Tyr). In Halorubrum lacusprofundi (strain ATCC 49239 / DSM 5036 / JCM 8891 / ACAM 34), this protein is Tyrosine--tRNA ligase.